The following is a 70-amino-acid chain: Small ribosomal subunit protein bS21 (70 aa).

Belongs to the bacterial ribosomal protein bS21 family.

In Campylobacter hominis (strain ATCC BAA-381 / DSM 21671 / CCUG 45161 / LMG 19568 / NCTC 13146 / CH001A), this protein is Small ribosomal subunit protein bS21.